A 190-amino-acid chain; its full sequence is Outer-membrane lipoprotein LolB (190 aa).

The signal sequence occupies residues 1–16 (MRLRFSLLLTVSLLAG). Cys17 is lipidated: N-palmitoyl cysteine. Cys17 carries the S-diacylglycerol cysteine lipid modification.

The protein belongs to the LolB family. Monomer.

It localises to the cell outer membrane. Its function is as follows. Plays a critical role in the incorporation of lipoproteins in the outer membrane after they are released by the LolA protein. This Dechloromonas aromatica (strain RCB) protein is Outer-membrane lipoprotein LolB.